We begin with the raw amino-acid sequence, 371 residues long: Tetraacyldisaccharide 4'-kinase (371 aa).

63–70 (AVGGAGKT) contacts ATP.

This sequence belongs to the LpxK family.

It catalyses the reaction a lipid A disaccharide + ATP = a lipid IVA + ADP + H(+). It functions in the pathway glycolipid biosynthesis; lipid IV(A) biosynthesis; lipid IV(A) from (3R)-3-hydroxytetradecanoyl-[acyl-carrier-protein] and UDP-N-acetyl-alpha-D-glucosamine: step 6/6. Functionally, transfers the gamma-phosphate of ATP to the 4'-position of a tetraacyldisaccharide 1-phosphate intermediate (termed DS-1-P) to form tetraacyldisaccharide 1,4'-bis-phosphate (lipid IVA). The chain is Tetraacyldisaccharide 4'-kinase from Anaeromyxobacter sp. (strain Fw109-5).